Consider the following 177-residue polypeptide: CRIB domain-containing protein RIC8 (177 aa).

The region spanning 17-30 (IGTPTDVKHVAHIG) is the CRIB domain. The segment covering 72 to 89 (STRSRDIPRLPKSSRERS) has biased composition (basic and acidic residues). The disordered stretch occupies residues 72 to 177 (STRSRDIPRL…SSTSDAGYLT (106 aa)). A compositionally biased stretch (low complexity) spans 158 to 171 (GSQVESISDSSSTS).

Its function is as follows. Functions as a downstream effector of Rho-related GTP binding proteins of the 'Rho of Plants' (ROPs) family. Participates in the propagation of ROP GTPase signals in specific cellular responses. In Arabidopsis thaliana (Mouse-ear cress), this protein is CRIB domain-containing protein RIC8 (RIC8).